We begin with the raw amino-acid sequence, 110 residues long: Ig kappa chain V region 3547 (110 aa).

A framework-1 region spans residues 1–23 (AYDMTQTPSSVSAAVGGTVTINC). The tract at residues 24–34 (QASEDISANLA) is complementarity-determining-1. A framework-2 region spans residues 35-49 (WYQQKPGQPPKLLIY). Residues 50 to 56 (AASDLAS) form a complementarity-determining-2 region. The tract at residues 57-88 (GVPSRFKGSGSGTEYTLTISGVQCADAATYYC) is framework-3. The interval 89–99 (QSADYSGSAVT) is complementarity-determining-3. Residues 100 to 109 (FGGGTEVVVK) are framework-4.

The sequence is that of Ig kappa chain V region 3547 from Oryctolagus cuniculus (Rabbit).